We begin with the raw amino-acid sequence, 428 residues long: GTPase Obg (428 aa).

The 158-residue stretch at 1–158 folds into the Obg domain; that stretch reads MFIDKAKVFI…LSIVLELKLL (158 aa). The OBG-type G domain maps to 159–331; the sequence is ADVGLLGFPN…VIKEAARMLK (173 aa). Residues 165-172, 190-194, 212-215, 282-285, and 312-314 each bind GTP; these read GFPNVGKS, FTTLK, DIPG, NKSD, and SAA. 2 residues coordinate Mg(2+): Ser-172 and Thr-192. An OCT domain is found at 345-428; it reads MYIPEEKRFT…LNDFEFEYLL (84 aa).

It belongs to the TRAFAC class OBG-HflX-like GTPase superfamily. OBG GTPase family. In terms of assembly, monomer. It depends on Mg(2+) as a cofactor.

The protein resides in the cytoplasm. Functionally, an essential GTPase which binds GTP, GDP and possibly (p)ppGpp with moderate affinity, with high nucleotide exchange rates and a fairly low GTP hydrolysis rate. Plays a role in control of the cell cycle, stress response, ribosome biogenesis and in those bacteria that undergo differentiation, in morphogenesis control. This chain is GTPase Obg, found in Clostridium botulinum (strain Eklund 17B / Type B).